The chain runs to 198 residues: MASYKNIFKITHNDVLPIQGSILIAEPFLQDAYFQRSVVLLIEHTEHGSMGFVLNKKTDLIVNSFFKEFAEFPEIPIYLGGPVSPNRLFFIHSLGDNIIPDALKINDYLYFDGDFNALKRYILNGHPIDGKVKFFLGYSGWTEGQLNHEIKRNSWAVSHITTDNILSADGEGYWKDSVELLGNDYKTWTKYPKDPYLN.

The protein belongs to the UPF0301 (AlgH) family.

The polypeptide is UPF0301 protein BDI_1431 (Parabacteroides distasonis (strain ATCC 8503 / DSM 20701 / CIP 104284 / JCM 5825 / NCTC 11152)).